The primary structure comprises 327 residues: Aromatase (327 aa).

Residue Cys315 participates in heme binding.

Belongs to the cytochrome P450 family. Heme is required as a cofactor.

It is found in the membrane. The enzyme catalyses testosterone + 3 reduced [NADPH--hemoprotein reductase] + 3 O2 = 17beta-estradiol + formate + 3 oxidized [NADPH--hemoprotein reductase] + 4 H2O + 4 H(+). It catalyses the reaction androst-4-ene-3,17-dione + 3 reduced [NADPH--hemoprotein reductase] + 3 O2 = estrone + formate + 3 oxidized [NADPH--hemoprotein reductase] + 4 H2O + 4 H(+). Catalyzes the formation of aromatic C18 estrogens from C19 androgens. The chain is Aromatase (CYP19A1) from Coturnix japonica (Japanese quail).